A 734-amino-acid chain; its full sequence is Photosystem I P700 chlorophyll a apoprotein A2 (734 aa).

Transmembrane regions (helical) follow at residues 46–69 (IFAS…FHVA), 135–158 (LYTG…LHLQ), 175–199 (LNHH…HVAI), 273–291 (IAHH…GHMY), 330–353 (IHFQ…QHMY), 369–395 (AALY…IFFI), 417–439 (AIIS…LYVH), and 517–535 (FLVH…LILV). [4Fe-4S] cluster contacts are provided by Cys559 and Cys568. 2 helical membrane passes run 575–596 (AFYL…YWHW) and 643–665 (LSVW…MFLI). The chlorophyll a site is built by His654, Met662, and Tyr670. Trp671 contributes to the phylloquinone binding site. The helical transmembrane segment at 707-727 (LVGLAHFSVGYIFTYAAFLIA) threads the bilayer.

It belongs to the PsaA/PsaB family. As to quaternary structure, the PsaA/B heterodimer binds the P700 chlorophyll special pair and subsequent electron acceptors. PSI consists of a core antenna complex that captures photons, and an electron transfer chain that converts photonic excitation into a charge separation. The eukaryotic PSI reaction center is composed of at least 11 subunits. It depends on P700 is a chlorophyll a/chlorophyll a' dimer, A0 is one or more chlorophyll a, A1 is one or both phylloquinones and FX is a shared 4Fe-4S iron-sulfur center. as a cofactor.

Its subcellular location is the plastid. The protein localises to the chloroplast thylakoid membrane. It catalyses the reaction reduced [plastocyanin] + hnu + oxidized [2Fe-2S]-[ferredoxin] = oxidized [plastocyanin] + reduced [2Fe-2S]-[ferredoxin]. In terms of biological role, psaA and PsaB bind P700, the primary electron donor of photosystem I (PSI), as well as the electron acceptors A0, A1 and FX. PSI is a plastocyanin-ferredoxin oxidoreductase, converting photonic excitation into a charge separation, which transfers an electron from the donor P700 chlorophyll pair to the spectroscopically characterized acceptors A0, A1, FX, FA and FB in turn. Oxidized P700 is reduced on the lumenal side of the thylakoid membrane by plastocyanin. This Vitis vinifera (Grape) protein is Photosystem I P700 chlorophyll a apoprotein A2.